We begin with the raw amino-acid sequence, 180 residues long: Mitochondrial membrane protein FMP33 (180 aa).

The next 3 membrane-spanning stretches (helical) occupy residues 34–54 (LYTS…LYLE), 121–141 (FSIV…STLG), and 145–165 (ILYK…YMAL).

The protein resides in the mitochondrion membrane. The protein is Mitochondrial membrane protein FMP33 (FMP33) of Saccharomyces cerevisiae (strain ATCC 204508 / S288c) (Baker's yeast).